Consider the following 561-residue polypeptide: 4-coumarate--CoA ligase 1 (561 aa).

ATP contacts are provided by S210, S211, G212, T213, T214, and K218. The (E)-4-coumaroyl-AMP site is built by Y260 and S264. K281 lines the CoA pocket. The SBD1 stretch occupies residues 283–352 (EINLLLELIQ…AKFPNAKLGQ (70 aa)). (E)-4-coumaroyl-AMP is bound by residues A330, Q352, G353, T357, and M365. The ATP site is built by Q352, G353, and T357. The SBD2 stretch occupies residues 353–420 (GYGMTEAGPV…IRGHQIMKGY (68 aa)). D441 and R456 together coordinate ATP. 2 residues coordinate (E)-4-coumaroyl-AMP: K458 and K462. Residues K464 and G465 each contribute to the CoA site. K547 is a binding site for ATP.

This sequence belongs to the ATP-dependent AMP-binding enzyme family. Requires Mg(2+) as cofactor. In terms of tissue distribution, preferentially expressed in roots, bolting stems and siliques. Also detected in leaves.

It carries out the reaction (E)-4-coumarate + ATP + CoA = (E)-4-coumaroyl-CoA + AMP + diphosphate. The catalysed reaction is (E)-caffeate + ATP + CoA = (E)-caffeoyl-CoA + AMP + diphosphate. The enzyme catalyses (E)-ferulate + ATP + CoA = (E)-feruloyl-CoA + AMP + diphosphate. It catalyses the reaction (E)-4-coumarate + ATP + H(+) = (E)-4-coumaroyl-AMP + diphosphate. It carries out the reaction (E)-4-coumaroyl-AMP + CoA = (E)-4-coumaroyl-CoA + AMP + H(+). The catalysed reaction is (E)-caffeate + ATP + H(+) = (E)-caffeoyl-AMP + diphosphate. The enzyme catalyses (E)-caffeoyl-AMP + CoA = (E)-caffeoyl-CoA + AMP + H(+). It catalyses the reaction (E)-ferulate + ATP + H(+) = (E)-feruloyl-AMP + diphosphate. It carries out the reaction (E)-feruloyl-AMP + CoA = (E)-feruloyl-CoA + AMP + H(+). The protein operates within phytoalexin biosynthesis; 3,4',5-trihydroxystilbene biosynthesis; 3,4',5-trihydroxystilbene from trans-4-coumarate: step 1/2. Functionally, produces CoA thioesters of a variety of hydroxy- and methoxy-substituted cinnamic acids, which are used to synthesize several phenylpropanoid-derived compounds, including anthocyanins, flavonoids, isoflavonoids, coumarins, lignin, suberin and wall-bound phenolics. Follows a two-step reaction mechanism, wherein the carboxylate substrate first undergoes adenylation by ATP, followed by a thioesterification in the presence of CoA to yield the final CoA thioesters. The sequence is that of 4-coumarate--CoA ligase 1 from Arabidopsis thaliana (Mouse-ear cress).